The primary structure comprises 217 residues: Ribonuclease HII (217 aa).

The RNase H type-2 domain occupies 26 to 215 (EIVCGVDEAG…VREALDLMAG (190 aa)). The a divalent metal cation site is built by D32, E33, and D124.

The protein belongs to the RNase HII family. It depends on Mn(2+) as a cofactor. The cofactor is Mg(2+).

It localises to the cytoplasm. It carries out the reaction Endonucleolytic cleavage to 5'-phosphomonoester.. Functionally, endonuclease that specifically degrades the RNA of RNA-DNA hybrids. The sequence is that of Ribonuclease HII from Burkholderia ambifaria (strain ATCC BAA-244 / DSM 16087 / CCUG 44356 / LMG 19182 / AMMD) (Burkholderia cepacia (strain AMMD)).